The following is an 89-amino-acid chain: Small ribosomal subunit protein uS15 (89 aa).

This sequence belongs to the universal ribosomal protein uS15 family. In terms of assembly, part of the 30S ribosomal subunit. Forms a bridge to the 50S subunit in the 70S ribosome, contacting the 23S rRNA.

Functionally, one of the primary rRNA binding proteins, it binds directly to 16S rRNA where it helps nucleate assembly of the platform of the 30S subunit by binding and bridging several RNA helices of the 16S rRNA. Its function is as follows. Forms an intersubunit bridge (bridge B4) with the 23S rRNA of the 50S subunit in the ribosome. The protein is Small ribosomal subunit protein uS15 of Staphylococcus epidermidis (strain ATCC 12228 / FDA PCI 1200).